The chain runs to 500 residues: Putative beta-lactamase-like 1 (500 aa).

The protein belongs to the beta-lactamase family.

This is Putative beta-lactamase-like 1 (LACTBL1) from Homo sapiens (Human).